The following is a 142-amino-acid chain: Large ribosomal subunit protein uL13 (142 aa).

The protein belongs to the universal ribosomal protein uL13 family. Part of the 50S ribosomal subunit.

In terms of biological role, this protein is one of the early assembly proteins of the 50S ribosomal subunit, although it is not seen to bind rRNA by itself. It is important during the early stages of 50S assembly. This is Large ribosomal subunit protein uL13 from Burkholderia cenocepacia (strain ATCC BAA-245 / DSM 16553 / LMG 16656 / NCTC 13227 / J2315 / CF5610) (Burkholderia cepacia (strain J2315)).